Consider the following 328-residue polypeptide: Glucokinase (328 aa).

An ATP-binding site is contributed by 16–21 (ADIGGT).

It belongs to the bacterial glucokinase family.

The protein localises to the cytoplasm. The catalysed reaction is D-glucose + ATP = D-glucose 6-phosphate + ADP + H(+). This Neisseria gonorrhoeae (strain ATCC 700825 / FA 1090) protein is Glucokinase.